The following is a 404-amino-acid chain: Tryptophan synthase beta chain (404 aa).

Lys90 is subject to N6-(pyridoxal phosphate)lysine.

Belongs to the TrpB family. In terms of assembly, tetramer of two alpha and two beta chains. Pyridoxal 5'-phosphate is required as a cofactor.

It catalyses the reaction (1S,2R)-1-C-(indol-3-yl)glycerol 3-phosphate + L-serine = D-glyceraldehyde 3-phosphate + L-tryptophan + H2O. The protein operates within amino-acid biosynthesis; L-tryptophan biosynthesis; L-tryptophan from chorismate: step 5/5. Its function is as follows. The beta subunit is responsible for the synthesis of L-tryptophan from indole and L-serine. In Geobacillus stearothermophilus (Bacillus stearothermophilus), this protein is Tryptophan synthase beta chain (trpB).